We begin with the raw amino-acid sequence, 196 residues long: DnaA initiator-associating protein DiaA (196 aa).

In terms of domain architecture, SIS spans 34–196 (LVQSLLNGNK…DNTLFPHQND (163 aa)).

Belongs to the SIS family. DiaA subfamily. As to quaternary structure, homotetramer; dimer of dimers.

Its function is as follows. Required for the timely initiation of chromosomal replication via direct interactions with the DnaA initiator protein. This is DnaA initiator-associating protein DiaA from Yersinia pestis bv. Antiqua (strain Antiqua).